The chain runs to 185 residues: Elongation factor P (185 aa).

Belongs to the elongation factor P family.

It localises to the cytoplasm. It participates in protein biosynthesis; polypeptide chain elongation. Involved in peptide bond synthesis. Stimulates efficient translation and peptide-bond synthesis on native or reconstituted 70S ribosomes in vitro. Probably functions indirectly by altering the affinity of the ribosome for aminoacyl-tRNA, thus increasing their reactivity as acceptors for peptidyl transferase. This is Elongation factor P from Bacillus cereus (strain ATCC 10987 / NRS 248).